A 65-amino-acid polypeptide reads, in one-letter code: MPKIKTNRGAAKRFRKTASGKIKRNSAFTSHILTSKTRKRKRQLRSSSIVAAVDQKNIARLIPYK.

The interval 1-47 is disordered; sequence MPKIKTNRGAAKRFRKTASGKIKRNSAFTSHILTSKTRKRKRQLRSS. The segment covering 10–24 has biased composition (basic residues); it reads AAKRFRKTASGKIKR. Polar residues predominate over residues 26–35; that stretch reads SAFTSHILTS.

Belongs to the bacterial ribosomal protein bL35 family.

This chain is Large ribosomal subunit protein bL35, found in Geobacter metallireducens (strain ATCC 53774 / DSM 7210 / GS-15).